The primary structure comprises 363 residues: MNRIQRVSSWLKEAGHTAAFIHTKENVFYLTGFYTEPHERLMGLFIFQEEEPFFVCPGMEAGQARNAGWNHEIIGYADHENPWELIEKALKKRNISIHMLAVEKDSISLSRAEQLKHATGGAQFVSAEETLNQFRLIKDDNEIRLLKEAAKLADYGVEVGTAALREGISEVEVLAQIEYELKKKGIQGMSFSTMVLFGEKSGQPHGNPGTATLKKGDFVLFDLGVILDGYCSDITRTFAYKTINPKQEAIYETVLQAEKAAIEASKPGVRIGDLDLTARGIIEKAGYGDYFPHRLGHGLGISVHEYPSMSQANDTLLQEGMVYTIEPGIYVPEIGGVRIEDDVHVTKDGAVALTQYPKDLIIL.

The Mn(2+) site is built by Asp-222, Asp-233, His-297, Glu-326, and Glu-340.

The protein belongs to the peptidase M24B family. Mn(2+) is required as a cofactor.

In Bacillus subtilis (strain 168), this protein is Putative dipeptidase YkvY (ykvY).